Reading from the N-terminus, the 275-residue chain is Methylglyoxal reductase DkgA (275 aa).

The Proton donor role is filled by Y51. Residue H107 coordinates substrate. Residue 187–241 coordinates NADP(+); it reads SPLAQGGEGVFDQKVIRELADKYGKTPAQIVIRWHLDCGLVVIPKSVTPSRIAEN.

Belongs to the aldo/keto reductase family. In terms of assembly, monomer.

The protein resides in the cytoplasm. It carries out the reaction hydroxyacetone + NADP(+) = methylglyoxal + NADPH + H(+). Aldo-keto reductase that significantly contributes to cellular methylglyoxal detoxification by catalyzing the NADPH-dependent conversion of methylglyoxal to acetol. The sequence is that of Methylglyoxal reductase DkgA from Salmonella typhimurium (strain LT2 / SGSC1412 / ATCC 700720).